Consider the following 171-residue polypeptide: NADH-quinone oxidoreductase subunit I 1 (171 aa).

4Fe-4S ferredoxin-type domains lie at 39–71 (IVLT…LSKA) and 81–110 (EHFR…LTPD). [4Fe-4S] cluster contacts are provided by Cys51, Cys54, Cys57, Cys61, Cys90, Cys93, Cys96, and Cys100.

It belongs to the complex I 23 kDa subunit family. NDH-1 is composed of 14 different subunits. Subunits NuoA, H, J, K, L, M, N constitute the membrane sector of the complex. The cofactor is [4Fe-4S] cluster.

It is found in the cell inner membrane. It catalyses the reaction a quinone + NADH + 5 H(+)(in) = a quinol + NAD(+) + 4 H(+)(out). Functionally, NDH-1 shuttles electrons from NADH, via FMN and iron-sulfur (Fe-S) centers, to quinones in the respiratory chain. The immediate electron acceptor for the enzyme in this species is believed to be ubiquinone. Couples the redox reaction to proton translocation (for every two electrons transferred, four hydrogen ions are translocated across the cytoplasmic membrane), and thus conserves the redox energy in a proton gradient. This Rhodopseudomonas palustris (strain HaA2) protein is NADH-quinone oxidoreductase subunit I 1.